The following is a 252-amino-acid chain: 5-oxoprolinase subunit A (252 aa).

Belongs to the LamB/PxpA family. As to quaternary structure, forms a complex composed of PxpA, PxpB and PxpC.

It carries out the reaction 5-oxo-L-proline + ATP + 2 H2O = L-glutamate + ADP + phosphate + H(+). Its function is as follows. Catalyzes the cleavage of 5-oxoproline to form L-glutamate coupled to the hydrolysis of ATP to ADP and inorganic phosphate. This chain is 5-oxoprolinase subunit A, found in Mycobacterium leprae (strain Br4923).